The following is a 1060-amino-acid chain: Centrosomal protein of 131 kDa (1060 aa).

Polar residues predominate over residues Met1 to Pro11. The interval Met1–Thr96 is disordered. Residues Met1–Leu244 are interaction with PLK4. Phosphoserine occurs at positions 14 and 35. Composition is skewed to polar residues over residues Arg32 to Thr50 and Leu73 to Gly88. At Ser47 the chain carries Phosphoserine; by MAPKAPK2. Ser78 is modified (phosphoserine; by MAPKAPK2 and PLK4). A phosphoserine mark is found at Ser89, Ser105, Ser114, Ser146, and Ser150. 2 disordered regions span residues Leu136–Arg155 and Glu217–Arg248. The segment covering Glu217–Lys226 has biased composition (basic and acidic residues). One can recognise an IQ domain in the interval Asn263–Gly283. 2 stretches are compositionally biased toward basic and acidic residues: residues Glu314–Arg327 and Lys344–Glu363. The tract at residues Glu314–Arg437 is disordered. Over residues Ala398 to Ser408 the composition is skewed to low complexity. Positions Pro409–Gln424 are enriched in basic and acidic residues. Thr473 is modified (phosphothreonine). A Phosphoserine modification is found at Ser481.

The protein belongs to the CEP131 family. Self-associates. Associates with the centriolar satellite BBSome protein complex Interacts with BBS4; the interaction limits BBS4 availability for association with the BBSome complex, and hence negatively regulates ciliary localization of the BBSome complex. Interacts with MIB1. Interacts with PCM1; the interaction increases in response to ultraviolet light (UV) radiation. Associates with microtubule; association to microtubule is reduced in response to cellular stress, such as UV stimulation, in a process that requires p38 MAP kinase signaling. Interacts with CEP290, DCTN1, MAP1LC3B, PCNT, PCM1 and CEP152. Interacts with 14-3-3 proteins following UV-induced phosphorylation by MAPKAPK2; this inhibits formation of novel centriolar satellites. Interacts with SDCCAG8. Interacts with CCDC61. Interacts with PLK4. Ubiquitinated. Undergoes monoubiquitination catalyzed by the E3 ubiquitin-protein ligase MIB1 in proliferating cells, preventing cilia formation. Monoubiquitination by MIB1 is inhibited in response to cellular stress, such as ultraviolet light (UV) radiation or heat shock, resulting in ciliogenesis restoration. Post-translationally, MAPKAPK2-dependent phosphorylation at Ser-47 and Ser-78 occurs in response to cellular stress such as exposure to ultraviolet irradiation and promotes binding to 14-3-3 proteins which leads to cytoplasmic sequestration of CEP131 and blocks formation of new centriolar satellites. Phosphorylation at Ser-78 mediated by PLK4 is essential for proper organization and integrity of centriolar satellites but is dispensable for its localization to centrioles and its function in ciliogenesis. Localized to the pre-acrosome region of round and elongated spermatids in testis but also present in ovary, brain and adipose tissue.

It is found in the cytoplasm. The protein localises to the cytoskeleton. Its subcellular location is the microtubule organizing center. The protein resides in the centrosome. It localises to the centriolar satellite. It is found in the centriole. The protein localises to the cilium basal body. Its subcellular location is the cytoplasmic vesicle. The protein resides in the secretory vesicle. It localises to the acrosome. In terms of biological role, component of centriolar satellites contributing to the building of a complex and dynamic network required to regulate cilia/flagellum formation. In proliferating cells, MIB1-mediated ubiquitination induces its sequestration within centriolar satellites, precluding untimely cilia formation initiation. In contrast, during normal and ultraviolet or heat shock cellular stress-induced ciliogenesis, its non-ubiquitinated form is rapidly displaced from centriolar satellites and recruited to centrosome/basal bodies in a microtubule- and p38 MAPK-dependent manner. Also acts as a negative regulator of BBSome ciliary trafficking. Plays a role in sperm flagellar formation; may be involved in the regulation of intraflagellar transport (IFT) and/or intramanchette (IMT) trafficking, which are important for axoneme extension and/or cargo delivery to the nascent sperm tail. Required for optimal cell proliferation and cell cycle progression; may play a role in the regulation of genome stability and centriole duplication in non-ciliogenic cells. Involved in centriole duplication. Required for CEP152, WDR62 and CEP63 centrosomal localization and promotes the centrosomal localization of CDK2. Essential for maintaining proper centriolar satellite integrity. This Mus musculus (Mouse) protein is Centrosomal protein of 131 kDa (Cep131).